We begin with the raw amino-acid sequence, 505 residues long: Ikaros family zinc finger protein (505 aa).

C2H2-type zinc fingers lie at residues 18 to 40, 46 to 68, 74 to 96, and 102 to 128; these read LTCEICGMVCIGPNVLMVHKRSH, FQCNQCGASFTQKGNLLRHVKLH, FKCSLCSYACRRRDALMGHIRTH, and YKCNFCSRSYKQRSSLEEHQERCPGFH. 2 stretches are compositionally biased toward polar residues: residues 262 to 273 and 309 to 327; these read FLNTPSPVTRSA and RFQHDSPLSTSRSGLSQQP. Disordered regions lie at residues 262-296 and 309-440; these read FLNTPSPVTRSAGQALEATRRLESESPGLPSDIGS and RFQH…VSGS. The span at 336–345 shows a compositional bias: gly residues; the sequence is ILGGSLGGIC. Positions 366–377 are enriched in polar residues; sequence ATSSPSNSCPDS. A compositionally biased stretch (low complexity) spans 393–406; the sequence is GSGSSTSRPNGSTG. Positions 409 to 419 are enriched in basic and acidic residues; sequence HRPEMHQDNGR. The span at 424-439 shows a compositional bias: polar residues; the sequence is SGASDSSSLPTYNVSG. 2 C2H2-type zinc fingers span residues 448-470 and 476-500; these read YPCHHCGLLFLDHVMYTLHMGCH and FECNVCGYRSRDRYEFSSHIIRGEH.

It belongs to the Ikaros C2H2-type zinc-finger protein family. As to quaternary structure, heterodimer and homodimer with other IKAROS family members. In terms of tissue distribution, expression is strongest in the blood, gills and intestine.

It is found in the nucleus. In Myxine glutinosa (Atlantic hagfish), this protein is Ikaros family zinc finger protein.